The sequence spans 464 residues: Protein FAM90A10 (464 aa).

Disordered regions lie at residues 1 to 42, 69 to 373, and 415 to 437; these read MMAR…DPRL, VPAT…LPTA, and HSPEKPGAFLAQSPHVSEKSEAP. Basic and acidic residues-rich tracts occupy residues 74 to 89 and 97 to 114; these read GKKEGKENLKPWKPRG and NKDKGEKEERPRQQDPQR. A compositionally biased stretch (low complexity) spans 180 to 197; that stretch reads LASLSPLRKASLSSSSSL.

Belongs to the FAM90 family.

This Homo sapiens (Human) protein is Protein FAM90A10 (FAM90A10).